Reading from the N-terminus, the 76-residue chain is Sec-independent protein translocase protein TatA (76 aa).

A helical transmembrane segment spans residues 1–21 (MGSFSIWHWLIVLLIVVLVFG). The tract at residues 44–76 (RDGSTAPADPAQQVTANKSADANTVDVEAKQKS) is disordered. A compositionally biased stretch (polar residues) spans 55–65 (QQVTANKSADA).

This sequence belongs to the TatA/E family. As to quaternary structure, the Tat system comprises two distinct complexes: a TatABC complex, containing multiple copies of TatA, TatB and TatC subunits, and a separate TatA complex, containing only TatA subunits. Substrates initially bind to the TatABC complex, which probably triggers association of the separate TatA complex to form the active translocon.

The protein resides in the cell inner membrane. Part of the twin-arginine translocation (Tat) system that transports large folded proteins containing a characteristic twin-arginine motif in their signal peptide across membranes. TatA could form the protein-conducting channel of the Tat system. The protein is Sec-independent protein translocase protein TatA of Methylibium petroleiphilum (strain ATCC BAA-1232 / LMG 22953 / PM1).